The sequence spans 648 residues: Biosynthetic arginine decarboxylase (648 aa).

Position 109 is an N6-(pyridoxal phosphate)lysine (Lys109). 291–301 (IDVGGGLGIDF) provides a ligand contact to substrate.

The protein belongs to the Orn/Lys/Arg decarboxylase class-II family. SpeA subfamily. Mg(2+) is required as a cofactor. The cofactor is pyridoxal 5'-phosphate.

The catalysed reaction is L-arginine + H(+) = agmatine + CO2. It functions in the pathway amine and polyamine biosynthesis; agmatine biosynthesis; agmatine from L-arginine: step 1/1. Functionally, catalyzes the biosynthesis of agmatine from arginine. The polypeptide is Biosynthetic arginine decarboxylase (Prochlorococcus marinus (strain MIT 9215)).